The following is a 232-amino-acid chain: ATP phosphoribosyltransferase (232 aa).

It belongs to the ATP phosphoribosyltransferase family. Short subfamily. In terms of assembly, heteromultimer composed of HisG and HisZ subunits.

Its subcellular location is the cytoplasm. It carries out the reaction 1-(5-phospho-beta-D-ribosyl)-ATP + diphosphate = 5-phospho-alpha-D-ribose 1-diphosphate + ATP. Its pathway is amino-acid biosynthesis; L-histidine biosynthesis; L-histidine from 5-phospho-alpha-D-ribose 1-diphosphate: step 1/9. Its function is as follows. Catalyzes the condensation of ATP and 5-phosphoribose 1-diphosphate to form N'-(5'-phosphoribosyl)-ATP (PR-ATP). Has a crucial role in the pathway because the rate of histidine biosynthesis seems to be controlled primarily by regulation of HisG enzymatic activity. The polypeptide is ATP phosphoribosyltransferase (hisG) (Mesorhizobium japonicum (strain LMG 29417 / CECT 9101 / MAFF 303099) (Mesorhizobium loti (strain MAFF 303099))).